Consider the following 77-residue polypeptide: MSDVAKRVKEIIAEQLGVDEAQAVSEASFMDDLGADSLDTVELVMALEEEFDIEIPDEDAEKIQTVQDAIDYITEHT.

A Carrier domain is found at 2 to 77 (SDVAKRVKEI…DAIDYITEHT (76 aa)). The residue at position 37 (S37) is an O-(pantetheine 4'-phosphoryl)serine.

Belongs to the acyl carrier protein (ACP) family. Post-translationally, 4'-phosphopantetheine is transferred from CoA to a specific serine of apo-ACP by AcpS. This modification is essential for activity because fatty acids are bound in thioester linkage to the sulfhydryl of the prosthetic group.

The protein resides in the cytoplasm. The protein operates within lipid metabolism; fatty acid biosynthesis. Functionally, carrier of the growing fatty acid chain in fatty acid biosynthesis. In Trichlorobacter lovleyi (strain ATCC BAA-1151 / DSM 17278 / SZ) (Geobacter lovleyi), this protein is Acyl carrier protein.